The chain runs to 143 residues: 6,7-dimethyl-8-ribityllumazine synthase (143 aa).

Residues F13, 45 to 47 (TFD), and 69 to 71 (CVI) each bind 5-amino-6-(D-ribitylamino)uracil. A (2S)-2-hydroxy-3-oxobutyl phosphate-binding site is contributed by 74–75 (ET). H77 acts as the Proton donor in catalysis. L102 serves as a coordination point for 5-amino-6-(D-ribitylamino)uracil. R117 lines the (2S)-2-hydroxy-3-oxobutyl phosphate pocket.

This sequence belongs to the DMRL synthase family.

It carries out the reaction (2S)-2-hydroxy-3-oxobutyl phosphate + 5-amino-6-(D-ribitylamino)uracil = 6,7-dimethyl-8-(1-D-ribityl)lumazine + phosphate + 2 H2O + H(+). Its pathway is cofactor biosynthesis; riboflavin biosynthesis; riboflavin from 2-hydroxy-3-oxobutyl phosphate and 5-amino-6-(D-ribitylamino)uracil: step 1/2. In terms of biological role, catalyzes the formation of 6,7-dimethyl-8-ribityllumazine by condensation of 5-amino-6-(D-ribitylamino)uracil with 3,4-dihydroxy-2-butanone 4-phosphate. This is the penultimate step in the biosynthesis of riboflavin. The chain is 6,7-dimethyl-8-ribityllumazine synthase from Archaeoglobus fulgidus (strain ATCC 49558 / DSM 4304 / JCM 9628 / NBRC 100126 / VC-16).